A 130-amino-acid polypeptide reads, in one-letter code: Glycine cleavage system H protein (130 aa).

A Lipoyl-binding domain is found at 25–107 (IATIGITEFA…YGEGWFLKVR (83 aa)). Residue lysine 66 is modified to N6-lipoyllysine.

It belongs to the GcvH family. The glycine cleavage system is composed of four proteins: P, T, L and H. (R)-lipoate is required as a cofactor.

Its function is as follows. The glycine cleavage system catalyzes the degradation of glycine. The H protein shuttles the methylamine group of glycine from the P protein to the T protein. The protein is Glycine cleavage system H protein of Trichormus variabilis (strain ATCC 29413 / PCC 7937) (Anabaena variabilis).